The sequence spans 272 residues: Undecaprenyl-diphosphatase (272 aa).

A run of 8 helical transmembrane segments spans residues 4-24 (FEVIKALFLGFVEGLTEFLPI), 43-63 (GGRVFEVVIQLGAILAVCWLY), 86-106 (ISVLIAFSPAVIIGVLAVDFI), 109-129 (VLFSPIVVAIALIVGALIIFW), 145-165 (ITFKQALLVGLAQCVAMIPGT), 186-206 (TEFSFFLAMPTMLGAATFDLI), 222-242 (VGFVAAFIAALLVVKALVLFV), and 249-269 (VFAWYRIVLGVIILIAAMFFN).

The protein belongs to the UppP family.

The protein localises to the cell inner membrane. It catalyses the reaction di-trans,octa-cis-undecaprenyl diphosphate + H2O = di-trans,octa-cis-undecaprenyl phosphate + phosphate + H(+). Functionally, catalyzes the dephosphorylation of undecaprenyl diphosphate (UPP). Confers resistance to bacitracin. This is Undecaprenyl-diphosphatase from Acinetobacter baumannii (strain AB307-0294).